Reading from the N-terminus, the 188-residue chain is Elongation factor P-like protein (188 aa).

The protein belongs to the elongation factor P family.

This chain is Elongation factor P-like protein, found in Xanthomonas oryzae pv. oryzae (strain MAFF 311018).